A 150-amino-acid polypeptide reads, in one-letter code: Putative pre-16S rRNA nuclease (150 aa).

Belongs to the YqgF nuclease family.

Its subcellular location is the cytoplasm. Its function is as follows. Could be a nuclease involved in processing of the 5'-end of pre-16S rRNA. This Chlamydia felis (strain Fe/C-56) (Chlamydophila felis) protein is Putative pre-16S rRNA nuclease.